An 874-amino-acid polypeptide reads, in one-letter code: GRB2-associated and regulator of MAPK protein 2 (874 aa).

Positions 12–339 (RWSMGAFPLD…LLAGDPRVER (328 aa)) are CABIT. Gly residues predominate over residues 188–206 (GGGGPASAGAAGGTGGGGA). Disordered stretches follow at residues 188-207 (GGGG…GGAR), 388-422 (PGLA…EPAA), 437-545 (GPEG…SPSP), 563-598 (GESS…AASL), and 625-742 (APFG…PSKA). Composition is skewed to low complexity over residues 388-403 (PGLA…APAG) and 518-545 (SPSS…SPSP). A compositionally biased stretch (polar residues) spans 575-585 (PSTTQPSQASR). Low complexity-rich tracts occupy residues 632 to 650 (PFSG…SSGP) and 658 to 691 (ATSG…SSSS). Serine 735 is subject to Phosphoserine. The SAM domain occupies 807–871 (SALSLEEVSR…KIMQFIKGWR (65 aa)).

This sequence belongs to the GAREM family.

In terms of biological role, probable adapter protein that may provide a link between cell surface epidermal growth factor receptor and the MAPK/ERK signaling pathway. The sequence is that of GRB2-associated and regulator of MAPK protein 2 (GAREM2) from Homo sapiens (Human).